The sequence spans 434 residues: Chaperone SurA (434 aa).

A signal peptide spans 1 to 22; sequence MKHSKKIIFALLALAMSNTSMA. PpiC domains are found at residues 173–274 and 283–383; these read DVEF…KVVD and VEEV…QLES.

The protein localises to the periplasm. It carries out the reaction [protein]-peptidylproline (omega=180) = [protein]-peptidylproline (omega=0). Its function is as follows. Chaperone involved in the correct folding and assembly of outer membrane proteins. Recognizes specific patterns of aromatic residues and the orientation of their side chains, which are found more frequently in integral outer membrane proteins. May act in both early periplasmic and late outer membrane-associated steps of protein maturation. The protein is Chaperone SurA of Shewanella frigidimarina (strain NCIMB 400).